The chain runs to 211 residues: Endo-1,4-beta-xylanase A (211 aa).

Residues 1-27 (MKVTAAFAGLLVTAFAAPVPEPVLVSR) form the signal peptide. The GH11 domain occupies 28–210 (SAGINYVQNY…GAGSASVTIS (183 aa)). Residue Glu-106 is the Nucleophile of the active site. Cys-119 and Cys-138 are disulfide-bonded. The Proton donor role is filled by Glu-197.

The protein belongs to the glycosyl hydrolase 11 (cellulase G) family.

It localises to the secreted. The enzyme catalyses Endohydrolysis of (1-&gt;4)-beta-D-xylosidic linkages in xylans.. It participates in glycan degradation; xylan degradation. Functionally, endo-1,4-beta-xylanase involved in the hydrolysis of xylan, a major structural heterogeneous polysaccharide found in plant biomass representing the second most abundant polysaccharide in the biosphere, after cellulose. The chain is Endo-1,4-beta-xylanase A (xynA) from Aspergillus niger.